Consider the following 464-residue polypeptide: GTPase Der (464 aa).

2 EngA-type G domains span residues Pro-3–Glu-166 and Ile-178–Phe-351. GTP-binding positions include Gly-9–Ser-16, Asp-56–Leu-60, Asn-118–Asp-121, Gly-184–Ser-191, Asp-231–Val-235, and Asn-296–Asp-299. The KH-like domain maps to Ile-352 to Glu-436.

It belongs to the TRAFAC class TrmE-Era-EngA-EngB-Septin-like GTPase superfamily. EngA (Der) GTPase family. In terms of assembly, associates with the 50S ribosomal subunit.

In terms of biological role, GTPase that plays an essential role in the late steps of ribosome biogenesis. The sequence is that of GTPase Der from Thioalkalivibrio sulfidiphilus (strain HL-EbGR7).